The chain runs to 100 residues: Urease subunit gamma (100 aa).

It belongs to the urease gamma subunit family. Heterotrimer of UreA (gamma), UreB (beta) and UreC (alpha) subunits. Three heterotrimers associate to form the active enzyme.

The protein localises to the cytoplasm. It catalyses the reaction urea + 2 H2O + H(+) = hydrogencarbonate + 2 NH4(+). It functions in the pathway nitrogen metabolism; urea degradation; CO(2) and NH(3) from urea (urease route): step 1/1. The polypeptide is Urease subunit gamma (Nostoc sp. (strain PCC 7120 / SAG 25.82 / UTEX 2576)).